We begin with the raw amino-acid sequence, 103 residues long: MHVKKGDKVMVISGKDKGKQGTILAAFPKKDRVLVEGVNMVKKHSKPTQANPQGGISNQEAPIHVSNVMPLDPKTGEVTRVGYKVEDGKKVRVAKKSGQVLDK.

This sequence belongs to the universal ribosomal protein uL24 family. In terms of assembly, part of the 50S ribosomal subunit.

Functionally, one of two assembly initiator proteins, it binds directly to the 5'-end of the 23S rRNA, where it nucleates assembly of the 50S subunit. In terms of biological role, one of the proteins that surrounds the polypeptide exit tunnel on the outside of the subunit. The chain is Large ribosomal subunit protein uL24 (rplX) from Bacillus spizizenii (strain ATCC 23059 / NRRL B-14472 / W23) (Bacillus subtilis subsp. spizizenii).